A 327-amino-acid chain; its full sequence is tRNA N6-adenosine threonylcarbamoyltransferase (327 aa).

The Fe cation site is built by histidine 109 and histidine 113. Substrate is bound by residues 132 to 136 (MVSGG), aspartate 165, glycine 178, aspartate 182, and asparagine 268. Residue aspartate 296 participates in Fe cation binding.

It belongs to the KAE1 / TsaD family. The cofactor is Fe(2+).

The protein resides in the cytoplasm. It carries out the reaction L-threonylcarbamoyladenylate + adenosine(37) in tRNA = N(6)-L-threonylcarbamoyladenosine(37) in tRNA + AMP + H(+). In terms of biological role, required for the formation of a threonylcarbamoyl group on adenosine at position 37 (t(6)A37) in tRNAs that read codons beginning with adenine. Is involved in the transfer of the threonylcarbamoyl moiety of threonylcarbamoyl-AMP (TC-AMP) to the N6 group of A37, together with TsaE and TsaB. TsaD likely plays a direct catalytic role in this reaction. This chain is tRNA N6-adenosine threonylcarbamoyltransferase, found in Thermotoga petrophila (strain ATCC BAA-488 / DSM 13995 / JCM 10881 / RKU-1).